The chain runs to 290 residues: Ribonuclease HIII (290 aa).

Residues 78–290 (LPLIGTDEVG…FKNTEKAKNA (213 aa)) form the RNase H type-2 domain. Residues aspartate 84, glutamate 85, and aspartate 187 each contribute to the a divalent metal cation site.

This sequence belongs to the RNase HII family. RnhC subfamily. Requires Mn(2+) as cofactor. Mg(2+) is required as a cofactor.

It localises to the cytoplasm. The enzyme catalyses Endonucleolytic cleavage to 5'-phosphomonoester.. Endonuclease that specifically degrades the RNA of RNA-DNA hybrids. This is Ribonuclease HIII from Streptococcus pneumoniae serotype 2 (strain D39 / NCTC 7466).